The sequence spans 81 residues: Sulfur carrier protein TusA (81 aa).

The Cysteine persulfide intermediate role is filled by cysteine 19.

It belongs to the sulfur carrier protein TusA family. In terms of assembly, interacts with IscS.

The protein localises to the cytoplasm. Its pathway is tRNA modification. Functionally, sulfur carrier protein involved in sulfur trafficking in the cell. Part of a sulfur-relay system required for 2-thiolation during synthesis of 2-thiouridine of the modified wobble base 5-methylaminomethyl-2-thiouridine (mnm(5)s(2)U) in tRNA. Interacts with IscS and stimulates its cysteine desulfurase activity. Accepts an activated sulfur from IscS, which is then transferred to TusD, and thus determines the direction of sulfur flow from IscS to 2-thiouridine formation. Also appears to be involved in sulfur transfer for the biosynthesis of molybdopterin. The chain is Sulfur carrier protein TusA from Escherichia coli (strain SMS-3-5 / SECEC).